The primary structure comprises 553 residues: Cytochrome P450 86A22 (553 aa).

The chain crosses the membrane as a helical span at residues 8–24 (MIVAIVAAYLLWFKSIT). C459 contributes to the heme binding site.

Belongs to the cytochrome P450 family. Requires heme as cofactor. Mostly expressed in the developing stigma of floral buds. Weakly detected in leaves, stems and flowers.

The protein localises to the membrane. It catalyses the reaction (9Z)-octadecenoyl-CoA + reduced [NADPH--hemoprotein reductase] + O2 = (9Z)-18-hydroxyoctadecenoyl-CoA + oxidized [NADPH--hemoprotein reductase] + H2O + H(+). The enzyme catalyses (9Z,12Z)-octadecadienoyl-CoA + reduced [NADPH--hemoprotein reductase] + O2 = (9Z,12Z)-18-hydroxyoctadecadienoyl-CoA + oxidized [NADPH--hemoprotein reductase] + H2O + H(+). In terms of biological role, fatty acyl-CoA omega-hydroxylase essential for the production of omega-hydroxy fatty acids and the biosynthesis of triacylglycerol-/diacylglycerol-based estolide polyesters in the stigma. Substrate preference is 16:0-CoA &gt; 18:1-CoA &gt; 18:0-CoA. The sequence is that of Cytochrome P450 86A22 from Petunia hybrida (Petunia).